The following is a 233-amino-acid chain: NAD-dependent protein deacylase (233 aa).

In terms of domain architecture, Deacetylase sirtuin-type spans 1–230; that stretch reads MKNIMILSGA…ALDIENFMKD (230 aa). 9–28 is a binding site for NAD(+); sequence GAGLSAPSGLKTFRDNDGLW. Substrate contacts are provided by tyrosine 53 and arginine 56. Residue 88-91 participates in NAD(+) binding; the sequence is QNVD. Histidine 106 serves as the catalytic Proton acceptor. 4 residues coordinate Zn(2+): cysteine 114, cysteine 117, cysteine 133, and cysteine 136. Residues 172 to 174 and isoleucine 213 each bind NAD(+); that span reads GTS.

It belongs to the sirtuin family. Class III subfamily. The cofactor is Zn(2+).

It localises to the cytoplasm. The enzyme catalyses N(6)-acetyl-L-lysyl-[protein] + NAD(+) + H2O = 2''-O-acetyl-ADP-D-ribose + nicotinamide + L-lysyl-[protein]. It carries out the reaction N(6)-succinyl-L-lysyl-[protein] + NAD(+) + H2O = 2''-O-succinyl-ADP-D-ribose + nicotinamide + L-lysyl-[protein]. NAD-dependent lysine deacetylase and desuccinylase that specifically removes acetyl and succinyl groups on target proteins. Modulates the activities of several proteins which are inactive in their acylated form. This chain is NAD-dependent protein deacylase, found in Campylobacter jejuni (strain RM1221).